We begin with the raw amino-acid sequence, 270 residues long: DNA repair protein RecO (270 aa).

The protein belongs to the RecO family.

Its function is as follows. Involved in DNA repair and RecF pathway recombination. The sequence is that of DNA repair protein RecO from Synechococcus sp. (strain WH7803).